Reading from the N-terminus, the 471-residue chain is Serine/threonine-protein kinase AtPK2/AtPK19 (471 aa).

The disordered stretch occupies residues 1–21 (MVSSQCSVANKNQTGKPFQKH). A Protein kinase domain is found at 140–395 (FEVLKVVGQG…AEEIKKHKWF (256 aa)). Residues 146 to 154 (VGQGAFGKV) and lysine 169 each bind ATP. Catalysis depends on aspartate 263, which acts as the Proton acceptor. The activation loop stretch occupies residues 281–307 (DFGLAKEFEENTRSNSMCGTTEYMAPE). The residue at position 296 (serine 296) is a Phosphoserine; by PDPK1. The region spanning 396–466 (KAINWKKLEA…VRPPHSFLHR (71 aa)) is the AGC-kinase C-terminal domain. A Phosphothreonine; by TOR modification is found at threonine 455.

This sequence belongs to the protein kinase superfamily. AGC Ser/Thr protein kinase family. S6 kinase subfamily. As to quaternary structure, interacts with TAP46. Binds to MRF1. Post-translationally, undergoes serine-specific autophosphorylation. Phosphorylated at Thr-455 by TOR.

It catalyses the reaction L-seryl-[protein] + ATP = O-phospho-L-seryl-[protein] + ADP + H(+). The enzyme catalyses L-threonyl-[protein] + ATP = O-phospho-L-threonyl-[protein] + ADP + H(+). With respect to regulation, activated by PDK1. Functionally, downstream effector of TOR signaling pathway. May be involved in adaptation of plant to cold or high-salt conditions. Mediates the phosphorylation of MRFs (e.g. MRF1). The polypeptide is Serine/threonine-protein kinase AtPK2/AtPK19 (ATPK2) (Arabidopsis thaliana (Mouse-ear cress)).